Here is a 407-residue protein sequence, read N- to C-terminus: MTIESTNSFVVPSDTKLIDVTPLGSTKLFQPIKVGNNVLPQRIAYVPTTRFRASKDHIPSDLQLNYYNARSQYPGTLIITEATFASERGGIDLHVPGIYNDAQAKSWKKINEAIHGNGSFSSVQLWYLGRVANAKDLKDSGLPLIAPSAVYWDENSEKLAKEAGNELRALTEEEIDHIVEVEYPNAAKHALEAGFDYVEIHGAHGYLLDQFLNLASNKRTDKYGCGSIENRARLLLRVVDKLIEVVGANRLALRLSPWASFQGMEIEGEEIHSYILQQLQQRADNGQQLAYISLVEPRVTGIYDVSLKDQQGRSNEFAYKIWKGNFIRAGNYTYDAPEFKTLINDLKNDRSIIGFSRFFTSNPDLVEKLKLGKPLNYYNREEFYKYYNYGYNSYDESEKQVIGKPLA.

The FMN site is built by Thr49 and Gln124. Position 201–204 (His201–His204) interacts with substrate. Tyr206 serves as the catalytic Proton donor. Residues Arg254 and Arg357 each coordinate FMN.

This sequence belongs to the NADH:flavin oxidoreductase/NADH oxidase family. It depends on FMN as a cofactor.

It catalyses the reaction A + NADPH + H(+) = AH2 + NADP(+). Oxidoreductase that binds mammalian estrogens with high affinity. This chain is Probable NADPH dehydrogenase, found in Candida albicans (Yeast).